The primary structure comprises 66 residues: U8-myrmicitoxin-Tb1a (66 aa).

The first 26 residues, 1–26 (MKLSFLSLAFAVIFVMAIMYAPQVEA), serve as a signal peptide directing secretion. Residues 27 to 50 (KASADADADADAAASADALAKASA) constitute a propeptide that is removed on maturation.

As to expression, expressed by the venom gland.

The protein localises to the secreted. Functionally, in vivo, this neurotoxin paralyzes about 50% of blowflies (L.caesar) one hour after intrathoracic injection, when tested at high doses (54 nmol/g). The polypeptide is U8-myrmicitoxin-Tb1a (Tetramorium bicarinatum (Tramp ant)).